The primary structure comprises 383 residues: Acetylornithine deacetylase (383 aa).

Histidine 80 is a binding site for Zn(2+). Aspartate 82 is an active-site residue. A Zn(2+)-binding site is contributed by aspartate 112. Residue glutamate 144 is part of the active site. 3 residues coordinate Zn(2+): glutamate 145, glutamate 169, and histidine 355.

This sequence belongs to the peptidase M20A family. ArgE subfamily. As to quaternary structure, homodimer. Zn(2+) is required as a cofactor. Requires Co(2+) as cofactor. The cofactor is glutathione.

It localises to the cytoplasm. The catalysed reaction is N(2)-acetyl-L-ornithine + H2O = L-ornithine + acetate. The protein operates within amino-acid biosynthesis; L-arginine biosynthesis; L-ornithine from N(2)-acetyl-L-ornithine (linear): step 1/1. Functionally, catalyzes the hydrolysis of the amide bond of N(2)-acetylated L-amino acids. Cleaves the acetyl group from N-acetyl-L-ornithine to form L-ornithine, an intermediate in L-arginine biosynthesis pathway, and a branchpoint in the synthesis of polyamines. The polypeptide is Acetylornithine deacetylase (Erwinia tasmaniensis (strain DSM 17950 / CFBP 7177 / CIP 109463 / NCPPB 4357 / Et1/99)).